A 181-amino-acid chain; its full sequence is Large ribosomal subunit protein uL5 (181 aa).

The protein belongs to the universal ribosomal protein uL5 family. As to quaternary structure, part of the 50S ribosomal subunit; part of the 5S rRNA/L5/L18/L25 subcomplex. Contacts the 5S rRNA and the P site tRNA. Forms a bridge to the 30S subunit in the 70S ribosome.

Functionally, this is one of the proteins that bind and probably mediate the attachment of the 5S RNA into the large ribosomal subunit, where it forms part of the central protuberance. In the 70S ribosome it contacts protein S13 of the 30S subunit (bridge B1b), connecting the 2 subunits; this bridge is implicated in subunit movement. Contacts the P site tRNA; the 5S rRNA and some of its associated proteins might help stabilize positioning of ribosome-bound tRNAs. The chain is Large ribosomal subunit protein uL5 from Helicobacter pylori (strain HPAG1).